Reading from the N-terminus, the 74-residue chain is Large ribosomal subunit protein bL31 (74 aa).

It belongs to the bacterial ribosomal protein bL31 family. Type A subfamily. As to quaternary structure, part of the 50S ribosomal subunit.

In terms of biological role, binds the 23S rRNA. This chain is Large ribosomal subunit protein bL31, found in Synechococcus sp. (strain JA-2-3B'a(2-13)) (Cyanobacteria bacterium Yellowstone B-Prime).